A 226-amino-acid chain; its full sequence is Protein transport protein sec20 (226 aa).

The Cytoplasmic portion of the chain corresponds to 1–189; that stretch reads MADVLNALEE…IKSLKLSDRS (189 aa). A coiled-coil region spans residues 53–75; sequence LRYEKAVQEYIRLNRRYRNKIAS. S97 is modified (phosphoserine). A helical; Anchor for type IV membrane protein membrane pass occupies residues 190-210; that stretch reads DYFLVVSGFGFFIFVVVYLLF. Residues 211–226 are Lumenal-facing; it reads KRIVWPILSMFLWFLR.

This sequence belongs to the SEC20 family. Component of a SNARE complex consisting of ufe1, sec20, sec22 and use1. Interacts with tip20 through its cytoplasmic domain.

The protein resides in the endoplasmic reticulum membrane. Its function is as follows. SNARE required for targeting and fusion of Golgi-derived retrograde transport vesicles with the ER. The polypeptide is Protein transport protein sec20 (Schizosaccharomyces pombe (strain 972 / ATCC 24843) (Fission yeast)).